We begin with the raw amino-acid sequence, 84 residues long: Cell division topological specificity factor (84 aa).

The protein belongs to the MinE family.

Prevents the cell division inhibition by proteins MinC and MinD at internal division sites while permitting inhibition at polar sites. This ensures cell division at the proper site by restricting the formation of a division septum at the midpoint of the long axis of the cell. In Cupriavidus pinatubonensis (strain JMP 134 / LMG 1197) (Cupriavidus necator (strain JMP 134)), this protein is Cell division topological specificity factor.